The primary structure comprises 357 residues: Ferrochelatase (357 aa).

Residues His-193 and Glu-272 each contribute to the Fe cation site.

The protein belongs to the ferrochelatase family.

The protein localises to the cytoplasm. It carries out the reaction heme b + 2 H(+) = protoporphyrin IX + Fe(2+). Its pathway is porphyrin-containing compound metabolism; protoheme biosynthesis; protoheme from protoporphyrin-IX: step 1/1. Catalyzes the ferrous insertion into protoporphyrin IX. This Hyphomonas neptunium (strain ATCC 15444) protein is Ferrochelatase.